Here is a 123-residue protein sequence, read N- to C-terminus: Class I hydrophobin pri2 (123 aa).

Residues 1–18 (MVAIKSLAILALPVMAMA) form the signal peptide. Disulfide bonds link Cys-31-Cys-102, Cys-38-Cys-96, Cys-39-Cys-84, and Cys-103-Cys-116. N-linked (GlcNAc...) asparagine glycosylation is found at Asn-33 and Asn-40.

The protein belongs to the fungal hydrophobin family. As to quaternary structure, self-assembles to form functional amyloid fibrils called rodlets. Self-assembly into fibrillar rodlets occurs spontaneously at hydrophobic:hydrophilic interfaces and the rodlets further associate laterally to form amphipathic monolayers.

It is found in the secreted. It localises to the cell wall. Functionally, aerial growth, conidiation, and dispersal of filamentous fungi in the environment rely upon a capability of their secreting small amphipathic proteins called hydrophobins (HPBs) with low sequence identity. Class I can self-assemble into an outermost layer of rodlet bundles on aerial cell surfaces, conferring cellular hydrophobicity that supports fungal growth, development and dispersal; whereas Class II form highly ordered films at water-air interfaces through intermolecular interactions but contribute nothing to the rodlet structure. This is Class I hydrophobin pri2 from Cyclocybe aegerita (Black poplar mushroom).